Here is a 92-residue protein sequence, read N- to C-terminus: uncharacterized protein (92 aa).

This is an uncharacterized protein from Pseudoalteromonas phage PM2 (Bacteriophage PM2).